We begin with the raw amino-acid sequence, 126 residues long: Fluoride-specific ion channel FluC 1 (126 aa).

4 helical membrane passes run 1–21 (MAGS…GAWL), 38–58 (WGTF…LALY), 67–87 (LALL…TFAV), and 99–119 (FVSL…AGVG). Residues G77 and S80 each contribute to the Na(+) site.

This sequence belongs to the fluoride channel Fluc/FEX (TC 1.A.43) family.

Its subcellular location is the cell inner membrane. It catalyses the reaction fluoride(in) = fluoride(out). Na(+) is not transported, but it plays an essential structural role and its presence is essential for fluoride channel function. Fluoride-specific ion channel. Important for reducing fluoride concentration in the cell, thus reducing its toxicity. The chain is Fluoride-specific ion channel FluC 1 from Synechococcus sp. (strain CC9902).